Reading from the N-terminus, the 200-residue chain is NADH-quinone oxidoreductase subunit C (200 aa).

It belongs to the complex I 30 kDa subunit family. As to quaternary structure, NDH-1 is composed of 14 different subunits. Subunits NuoB, C, D, E, F, and G constitute the peripheral sector of the complex.

It is found in the cell inner membrane. The enzyme catalyses a quinone + NADH + 5 H(+)(in) = a quinol + NAD(+) + 4 H(+)(out). Functionally, NDH-1 shuttles electrons from NADH, via FMN and iron-sulfur (Fe-S) centers, to quinones in the respiratory chain. The immediate electron acceptor for the enzyme in this species is believed to be ubiquinone. Couples the redox reaction to proton translocation (for every two electrons transferred, four hydrogen ions are translocated across the cytoplasmic membrane), and thus conserves the redox energy in a proton gradient. This Chelativorans sp. (strain BNC1) protein is NADH-quinone oxidoreductase subunit C.